The sequence spans 501 residues: MNSLLSLEHISKGFPGVRALNDISFELQSGEIHALLGENGAGKSTLMKILCGVYKQDAGRILIDGAPVDFRHYHDATDAGVGVIFQEFSLIPYLNAVENIFLGRELRNALGMLRKKDMRAQAEKICQRLDVNIDLDAPVDHLSVAEQQFVEIAKALSLDARILVLDEPTATLTPNEAEHLFRVMRELKAQGVGMVFISHHMEEIYEICDRITVLRDGEKIGDREVGEVAVDELLEMMVGRKISNSFPEKTPLRNDGDIVIDARAIQLHKNGPVNSFQVRKGEILGFAGLVGSGRTETALAMIGALPACRKEVSVEGEPAAMKTPAEALRRGIGLLPESRKKEGLILPFSIRENITLNNLAKVSGAASVIDRKRESEVAETLSAKVRVKAPDCETPVGNLSGGNQQKVVIARWLNNDCKVLIFDEPTRGIDVGAKTEIYRLMKQLTAQGVSIIMISSELPEVVGVSDRVAVFRQGSIVKILEGDAVNSNEIMRYATGGVKDE.

2 ABC transporter domains span residues 5–241 (LSLE…VGRK) and 252–498 (LRND…TGGV). 37–44 (GENGAGKS) contacts ATP.

This sequence belongs to the ABC transporter superfamily. Ribose importer (TC 3.A.1.2.1) family. The complex is composed of an ATP-binding protein (RbsA), two transmembrane proteins (RbsC) and a solute-binding protein (RbsB).

It localises to the cell inner membrane. It carries out the reaction D-ribose(out) + ATP + H2O = D-ribose(in) + ADP + phosphate + H(+). Functionally, part of the ABC transporter complex RbsABC involved in ribose import. Responsible for energy coupling to the transport system. The polypeptide is Ribose import ATP-binding protein RbsA (Hahella chejuensis (strain KCTC 2396)).